Reading from the N-terminus, the 647-residue chain is DNA mismatch repair protein MutL (647 aa).

Disordered regions lie at residues 356–391 (EGSQAPLPVTPQPRPALTSEKPVPAPQAQPQQSSIS) and 407–428 (PRPQPSLRPQYQGSVTSKEALP). Polar residues predominate over residues 413-423 (LRPQYQGSVTS).

This sequence belongs to the DNA mismatch repair MutL/HexB family.

This protein is involved in the repair of mismatches in DNA. It is required for dam-dependent methyl-directed DNA mismatch repair. May act as a 'molecular matchmaker', a protein that promotes the formation of a stable complex between two or more DNA-binding proteins in an ATP-dependent manner without itself being part of a final effector complex. The chain is DNA mismatch repair protein MutL from Citrifermentans bemidjiense (strain ATCC BAA-1014 / DSM 16622 / JCM 12645 / Bem) (Geobacter bemidjiensis).